Reading from the N-terminus, the 76-residue chain is Esculentin-2SN1 (76 aa).

The first 22 residues, 1–22 (MFTMKKSLLFLFFLGTISLSLC), serve as a signal peptide directing secretion. Residues 23-37 (EQERGADEDDGGEEV) constitute a propeptide that is removed on maturation. Cysteine 70 and cysteine 76 are oxidised to a cystine.

The protein belongs to the frog skin active peptide (FSAP) family. Esculentin subfamily. Expressed by the skin glands.

The protein localises to the secreted. Functionally, antimicrobial peptide. Active against some Gram-negative and a variety of Gram-positive bacterial strains. Not active against fungi. Shows very weak hemolytic activity against human erythrocytes. This Sylvirana spinulosa (Fine-spined frog) protein is Esculentin-2SN1.